Reading from the N-terminus, the 234-residue chain is Sugar fermentation stimulation protein A (234 aa).

The H-T-H motif DNA-binding region spans 201 to 220; that stretch reads LLSEAQQRGVEILAYKAEIS.

The protein belongs to the SfsA family.

Functionally, binds to DNA non-specifically. Could be a regulatory factor involved in maltose metabolism. In Shigella boydii serotype 4 (strain Sb227), this protein is Sugar fermentation stimulation protein A.